The following is a 276-amino-acid chain: MLIHPQINPVALQLGPLAIHWYGLTYLAAFGLFFFLATRRLRHEPYASITGPGAWSRKDIEDILFLGVMGVVIGGRLGYCLFYKPGYYLAHPLEILAVWQGGMSFHGGMLGVLASQFWFARTRQRPWLQVMDFVAPCVPTGLAAGRMGNFINGELWGRFSSPDLPWGMVFRNSGSMLPRHPSQVYQFLLEGLLLFVLLWLYARKPRKMGQVSGAFLVGYGVFRFIAEYFREPDDFLGILALGLSMGQWLCVPMIVGGAGLWWWASQRAASAPAARA.

The next 3 membrane-spanning stretches (helical) occupy residues 17-37 (LAIH…FFLA), 63-83 (ILFL…CLFY), and 95-115 (ILAV…VLAS). Residue Arg-146 coordinates a 1,2-diacyl-sn-glycero-3-phospho-(1'-sn-glycerol). Transmembrane regions (helical) follow at residues 182–202 (SQVY…WLYA), 209–229 (GQVS…AEYF), and 235–255 (FLGI…PMIV).

It belongs to the Lgt family.

The protein localises to the cell inner membrane. It catalyses the reaction L-cysteinyl-[prolipoprotein] + a 1,2-diacyl-sn-glycero-3-phospho-(1'-sn-glycerol) = an S-1,2-diacyl-sn-glyceryl-L-cysteinyl-[prolipoprotein] + sn-glycerol 1-phosphate + H(+). Its pathway is protein modification; lipoprotein biosynthesis (diacylglyceryl transfer). Catalyzes the transfer of the diacylglyceryl group from phosphatidylglycerol to the sulfhydryl group of the N-terminal cysteine of a prolipoprotein, the first step in the formation of mature lipoproteins. The protein is Phosphatidylglycerol--prolipoprotein diacylglyceryl transferase of Polaromonas sp. (strain JS666 / ATCC BAA-500).